A 198-amino-acid polypeptide reads, in one-letter code: Nucleoid occlusion factor SlmA (198 aa).

Positions 10 to 70 constitute an HTH tetR-type domain; the sequence is NRREEILQSL…SLIEFIEDSL (61 aa). The segment at residues 33–52 is a DNA-binding region (H-T-H motif); sequence TTAKLAASVGVSEAALYRHF. Residues 117 to 144 adopt a coiled-coil conformation; sequence EQDRLQGRINQLFERIEAQLRQVLREKR.

This sequence belongs to the nucleoid occlusion factor SlmA family. As to quaternary structure, homodimer. Interacts with FtsZ.

Its subcellular location is the cytoplasm. It is found in the nucleoid. Required for nucleoid occlusion (NO) phenomenon, which prevents Z-ring formation and cell division over the nucleoid. Acts as a DNA-associated cell division inhibitor that binds simultaneously chromosomal DNA and FtsZ, and disrupts the assembly of FtsZ polymers. SlmA-DNA-binding sequences (SBS) are dispersed on non-Ter regions of the chromosome, preventing FtsZ polymerization at these regions. The sequence is that of Nucleoid occlusion factor SlmA from Salmonella paratyphi A (strain ATCC 9150 / SARB42).